Consider the following 131-residue polypeptide: Large ribosomal subunit protein bL17 (131 aa).

The protein belongs to the bacterial ribosomal protein bL17 family. In terms of assembly, part of the 50S ribosomal subunit. Contacts protein L32.

The sequence is that of Large ribosomal subunit protein bL17 from Methylacidiphilum infernorum (isolate V4) (Methylokorus infernorum (strain V4)).